Consider the following 254-residue polypeptide: Cell division protein FtsQ (254 aa).

Topologically, residues 1–27 are cytoplasmic; that stretch reads MNILKRKTPQNIRFGEQKPKYYFHIRA. Residues 28-48 form a helical membrane-spanning segment; the sequence is FAVLLGVFFLLGVYFNWQSIL. Over 49–254 the chain is Periplasmic; the sequence is EKMDDKPISA…AGAAVGMVDR (206 aa). Residues 54–124 form the POTRA domain; sequence KPISAFALVG…NRLSIWVSEY (71 aa).

The protein belongs to the FtsQ/DivIB family. FtsQ subfamily. Part of a complex composed of FtsB, FtsL and FtsQ.

The protein resides in the cell inner membrane. Functionally, essential cell division protein. May link together the upstream cell division proteins, which are predominantly cytoplasmic, with the downstream cell division proteins, which are predominantly periplasmic. May control correct divisome assembly. The protein is Cell division protein FtsQ of Haemophilus influenzae (strain ATCC 51907 / DSM 11121 / KW20 / Rd).